The chain runs to 212 residues: Uridine kinase (212 aa).

Residue 13–20 (GGSGSGKT) coordinates ATP.

This sequence belongs to the uridine kinase family.

The protein resides in the cytoplasm. It carries out the reaction uridine + ATP = UMP + ADP + H(+). It catalyses the reaction cytidine + ATP = CMP + ADP + H(+). It functions in the pathway pyrimidine metabolism; CTP biosynthesis via salvage pathway; CTP from cytidine: step 1/3. Its pathway is pyrimidine metabolism; UMP biosynthesis via salvage pathway; UMP from uridine: step 1/1. In Bacillus anthracis (strain A0248), this protein is Uridine kinase.